Here is a 304-residue protein sequence, read N- to C-terminus: MTALSARMLTRSRSLGPGAGPRGCREEPGPLRRREAAAEARKSHSPVKRPRKAQRLRVAYEGSDSEKGEGAEPLKVPVWEPQDWQQQLVNIRAMRNKKDAPVDHLGTEHCYDSSAPPKVRRYQVLLSLMLSSQTKDQVTAGAMQRLRARGLTVDSILQTDDATLGKLIYPVGFWRSKVKYIKQTSAILQQHYGGDIPASVAELVALPGVGPKMAHLAMAVAWGTVSGIAVDTHVHRIANRLRWTKKATKSPEETRAALEEWLPRELWHEINGLLVGFGQQTCLPVHPRCHACLNQALCPAAQGL.

A mitochondrion-targeting transit peptide spans 1–22 (MTALSARMLTRSRSLGPGAGPR). Residues 1 to 72 (MTALSARMLT…SDSEKGEGAE (72 aa)) form a disordered region. Residues 23–42 (GCREEPGPLRRREAAAEARK) are compositionally biased toward basic and acidic residues. The short motif at 28 to 52 (PGPLRRREAAAEARKSHSPVKRPRK) is the Bipartite nuclear localization signal element. Residues 43 to 55 (SHSPVKRPRKAQR) show a composition bias toward basic residues. Ser-63 and Ser-65 each carry phosphoserine. Residues 191–215 (HYGGDIPASVAELVALPGVGPKMAH) enclose the HhH domain. The Nucleophile; for N-glycosylase activity role is filled by Lys-212. [4Fe-4S] cluster-binding residues include Cys-282, Cys-289, Cys-292, and Cys-298.

Belongs to the Nth/MutY family. Interacts with YBX1. Interacts with ERCC5/XPG; the interaction stimulates NTHL1 activity and NTHL1 binding to its DNA substrate. It depends on [4Fe-4S] cluster as a cofactor. Post-translationally, ubiquitinated by TRIM26; leading to proteasomal degradation. In terms of tissue distribution, widely expressed with highest levels in heart and lowest levels in lung and liver.

It localises to the nucleus. The protein resides in the mitochondrion. It catalyses the reaction 2'-deoxyribonucleotide-(2'-deoxyribose 5'-phosphate)-2'-deoxyribonucleotide-DNA = a 3'-end 2'-deoxyribonucleotide-(2,3-dehydro-2,3-deoxyribose 5'-phosphate)-DNA + a 5'-end 5'-phospho-2'-deoxyribonucleoside-DNA + H(+). With respect to regulation, APE1 displaces NTHL1 from the N-glycosylase-generated AP site in DNA, thereby increasing the turnover of the DNA N-glycosylase activity. AP lyase activity is stimulated by YBX1. ERCC5/XPG stimulates NTHL1 activity and NTHL1 binding to its DNA substrate. Bifunctional DNA N-glycosylase with associated apurinic/apyrimidinic (AP) lyase function that catalyzes the first step in base excision repair (BER), the primary repair pathway for the repair of oxidative DNA damage. The DNA N-glycosylase activity releases the damaged DNA base from DNA by cleaving the N-glycosidic bond, leaving an AP site. The AP-lyase activity cleaves the phosphodiester bond 3' to the AP site by a beta-elimination. Primarily recognizes and repairs oxidative base damage of pyrimidines. Also has 8-oxo-7,8-dihydroguanine (8-oxoG) DNA glycosylase activity. Acts preferentially on DNA damage opposite guanine residues in DNA. Is able to process lesions in nucleosomes without requiring or inducing nucleosome disruption. The sequence is that of Endonuclease III-like protein 1 from Homo sapiens (Human).